We begin with the raw amino-acid sequence, 420 residues long: Putative epoxide hydrolase (420 aa).

Belongs to the peptidase S33 family.

It functions in the pathway mycotoxin biosynthesis. Its function is as follows. Putative epoxide hydrolase; part of the fragmented gene cluster that mediates the biosynthesis of dothistromin (DOTH), a polyketide toxin very similar in structure to the aflatoxin precursor, versicolorin B. The first step of the pathway is the conversion of acetate to norsolorinic acid (NOR) and requires the fatty acid synthase subunits hexA and hexB, as well as the polyketide synthase pksA. PksA combines a hexanoyl starter unit and 7 malonyl-CoA extender units to synthesize the precursor NOR. The hexanoyl starter unit is provided to the acyl-carrier protein (ACP) domain by the fungal fatty acid synthase hexA/hexB. The second step is the conversion of NOR to averantin (AVN) and requires the norsolorinic acid ketoreductase nor1, which catalyzes the dehydration of norsolorinic acid to form (1'S)-averantin. The cytochrome P450 monooxygenase avnA then catalyzes the hydroxylation of AVN to 5'hydroxyaverantin (HAVN). The next step is performed by adhA that transforms HAVN to averufin (AVF). Averufin might then be converted to hydroxyversicolorone by cypX and avfA. Hydroxyversicolorone is further converted versiconal hemiacetal acetate (VHA) by moxY. VHA is then the substrate for the versiconal hemiacetal acetate esterase est1 to yield versiconal (VAL). Versicolorin B synthase vbsA then converts VAL to versicolorin B (VERB) by closing the bisfuran ring. Then, the activity of the versicolorin B desaturase verB leads to versicolorin A (VERA). DotB, a predicted chloroperoxidase, may perform epoxidation of the A-ring of VERA. Alternatively, a cytochrome P450, such as cypX or avnA could catalyze this step. It is also possible that another, uncharacterized, cytochrome P450 enzyme is responsible for this step. Opening of the epoxide could potentially be achieved by the epoxide hydrolase epoA. However, epoA seems not to be required for DOTH biosynthesis, but other epoxide hydrolases may have the ability to complement this hydrolysis. Alternatively, opening of the epoxide ring could be achieved non-enzymatically. The next step is the deoxygenation of ring A to yield the 5,8-dihydroxyanthraquinone which is most likely catalyzed by the NADPH dehydrogenase encoded by ver1. The last stages of DOTH biosynthesis are proposed to involve hydroxylation of the bisfuran. OrdB and norB might have oxidative roles here. An alternative possibility is that cytochrome P450 monoogenases such as avnA and cypX might perform these steps in addition to previously proposed steps. The sequence is that of Putative epoxide hydrolase from Dothistroma septosporum (Red band needle blight fungus).